A 100-amino-acid polypeptide reads, in one-letter code: MFAVIETGGKQYLVKKGSVIKVEKLEAEEGKEVEIDKAVCLSGNGLSYLTDATVKAEVLEQCRGEKIIIFKKKRRKNYRRKTGHRQYITVLRINEINLQK.

The protein belongs to the bacterial ribosomal protein bL21 family. Part of the 50S ribosomal subunit. Contacts protein L20.

Functionally, this protein binds to 23S rRNA in the presence of protein L20. In Wolbachia sp. subsp. Brugia malayi (strain TRS), this protein is Large ribosomal subunit protein bL21.